A 539-amino-acid chain; its full sequence is Chaperonin GroEL (539 aa).

Residues 29–32 (TIGP), 86–90 (DGTTT), G413, 476–478 (NAA), and D492 contribute to the ATP site.

Belongs to the chaperonin (HSP60) family. In terms of assembly, forms a cylinder of 14 subunits composed of two heptameric rings stacked back-to-back. Interacts with the co-chaperonin GroES.

The protein localises to the cytoplasm. It carries out the reaction ATP + H2O + a folded polypeptide = ADP + phosphate + an unfolded polypeptide.. Together with its co-chaperonin GroES, plays an essential role in assisting protein folding. The GroEL-GroES system forms a nano-cage that allows encapsulation of the non-native substrate proteins and provides a physical environment optimized to promote and accelerate protein folding. This is Chaperonin GroEL from Staphylococcus epidermidis.